The sequence spans 347 residues: Bifunctional methylenetetrahydrofolate dehydrogenase/cyclohydrolase 2, mitochondrial (347 aa).

Substrate is bound by residues 98-102 and 145-147; these read YVRNK and VQL. NAD(+)-binding positions include 214–216 and arginine 247; that span reads GRS. Position 323-327 (323-327) interacts with substrate; sequence PGGVG.

Belongs to the tetrahydrofolate dehydrogenase/cyclohydrolase family. The cofactor is Mg(2+). Isoform 1, isoform 4 and isoform 5 are expressed in brain and placenta.

The protein resides in the mitochondrion inner membrane. It carries out the reaction (6R)-5,10-methylene-5,6,7,8-tetrahydrofolate + NAD(+) = (6R)-5,10-methenyltetrahydrofolate + NADH. The catalysed reaction is (6R)-5,10-methenyltetrahydrofolate + H2O = (6R)-10-formyltetrahydrofolate + H(+). The enzyme catalyses (6R)-5,10-methylene-5,6,7,8-tetrahydrofolate + NADP(+) = (6R)-5,10-methenyltetrahydrofolate + NADPH. The protein operates within one-carbon metabolism; tetrahydrofolate interconversion. In terms of biological role, bifunctional mitochondrial folate-interconverting enzyme that has both NAD/NADP-dependent methylenetetrahydrofolate dehydrogenase and methenyltetrahydrofolate cyclohydrolase activities. This is Bifunctional methylenetetrahydrofolate dehydrogenase/cyclohydrolase 2, mitochondrial from Homo sapiens (Human).